The chain runs to 735 residues: Dolichyl-diphosphooligosaccharide--protein glycosyltransferase subunit STT3B (735 aa).

Residues 1–38 are Cytoplasmic-facing; that stretch reads MGGKSEPAKSESMATKPDLLNTSFFSFKSLKLKTKQQE. The helical transmembrane segment at 39-59 threads the bilayer; it reads LLLRISILGLVYILAFIARLF. Over 60-142 the chain is Lumenal; sequence SVLRYESMIH…VHIREVCVLT (83 aa). Positions 70-72 match the DXD motif 1 motif; sequence EFD. A Mn(2+)-binding site is contributed by D72. The helical transmembrane segment at 143-161 threads the bilayer; it reads APFFASNTTLVAYFFGKEL. Residues 162–163 are Cytoplasmic-facing; the sequence is WD. A helical transmembrane segment spans residues 164–181; sequence TGAGLVAAVLIAICPGYI. The Lumenal segment spans residues 182-192; that stretch reads SRSVAGSYDNE. Residues D190 and E192 each coordinate Mn(2+). The DXD motif 2 motif lies at 190–192; that stretch reads DNE. The chain crosses the membrane as a helical span at residues 193–212; the sequence is AVAIFALLLTFYLFVKAVNT. The Cytoplasmic segment spans residues 213–214; the sequence is GS. Residues 215 to 229 form a helical membrane-spanning segment; it reads LAWALASAFGYFYMV. The Lumenal portion of the chain corresponds to 230-234; sequence SAWGG. Residues 235 to 251 form a helical membrane-spanning segment; it reads YVFIINLVPLYVLVLLI. Topologically, residues 252 to 256 are cytoplasmic; the sequence is TGRYS. The helical transmembrane segment at 257–282 threads the bilayer; it reads MRLYIAYNCMYILGMLLAMQIRFVGF. Over 283 to 290 the chain is Lumenal; sequence QHVQSGEH. Residues 291–310 form a helical membrane-spanning segment; that stretch reads MGAMGVFLLMQVFYFLDWVK. Topologically, residues 311–326 are cytoplasmic; that stretch reads YQLNDTKLFQTFLRIT. The helical transmembrane segment at 327 to 347 threads the bilayer; sequence VTSAILVGGVAVGVGTASGYI. Residues 348–380 are Lumenal-facing; that stretch reads SPWTGRFYSLLDPTYAKDHIPIIASVSEHQPTA. Residues 372–375 carry the SVSE motif motif; the sequence is SVSE. Residues 381 to 403 form a helical membrane-spanning segment; it reads WSSFMFDYHILLFLFPAGLYFCF. Residues 404 to 409 lie on the Cytoplasmic side of the membrane; it reads KRLTDA. A helical membrane pass occupies residues 410–426; it reads TIFIVMYGLTSLYFAGV. The Lumenal segment spans residues 427-430; it reads MVRL. Residue R429 participates in dolichyl diphosphooligosaccharide binding. The chain crosses the membrane as a helical span at residues 431–452; it reads ILVATPAVCLISAIAVSATIKN. Residues 453 to 494 are Cytoplasmic-facing; that stretch reads LTSLLRTKQKVSQTGSTKGAGSSKASSKVTLDQSQPFQKNGA. The chain crosses the membrane as a helical span at residues 495–515; it reads IALLVGVFYLLSRYAIHCTWV. Residues 516–735 lie on the Lumenal side of the membrane; that stretch reads TAEAYSSPSI…YRVKPPTNRL (220 aa). The interval 562–564 is interacts with target acceptor peptide in protein substrate; it reads WWD. The short motif at 562-566 is the WWDYG motif element; it reads WWDYG. Dolichyl diphosphooligosaccharide is bound at residue Y567. N-linked (GlcNAc...) asparagine glycans are attached at residues N574 and N581. A glycan (N-linked (GlcNAc...) (high mannose) asparagine) is linked at N585. Positions 629–636 match the DK motif motif; the sequence is DINKFLWM.

This sequence belongs to the STT3 family. In terms of assembly, component of the oligosaccharyltransferase (OST) complex. Mg(2+) serves as cofactor. It depends on Mn(2+) as a cofactor. Expressed preferentially in the root but also in the shoot.

The protein resides in the endoplasmic reticulum membrane. The enzyme catalyses a di-trans,poly-cis-dolichyl diphosphooligosaccharide + L-asparaginyl-[protein] = N(4)-(oligosaccharide-(1-&gt;4)-N-acetyl-beta-D-glucosaminyl-(1-&gt;4)-N-acetyl-beta-D-glucosaminyl)-L-asparaginyl-[protein] + a di-trans,poly-cis-dolichyl diphosphate + H(+). The protein operates within protein modification; protein glycosylation. Its function is as follows. Catalytic subunit of the oligosaccharyl transferase (OST) complex that catalyzes the initial transfer of a defined glycan (Glc(3)Man(9)GlcNAc(2) in eukaryotes) from the lipid carrier dolichol-pyrophosphate to an asparagine residue within an Asn-X-Ser/Thr consensus motif in nascent polypeptide chains, the first step in protein N-glycosylation. N-glycosylation occurs cotranslationally and the complex associates with the Sec61 complex at the channel-forming translocon complex that mediates protein translocation across the endoplasmic reticulum (ER). All subunits are required for a maximal enzyme activity. This subunit contains the active site and the acceptor peptide and donor lipid-linked oligosaccharide (LLO) binding pockets. This chain is Dolichyl-diphosphooligosaccharide--protein glycosyltransferase subunit STT3B (STT3B), found in Arabidopsis thaliana (Mouse-ear cress).